The chain runs to 430 residues: Agropine synthesis reductase (430 aa).

203–227 contacts NAD(+); sequence LVSGSNRGVGKAIAEDLIAHGYRLS. S333 serves as a coordination point for substrate. Y346 serves as the catalytic Proton acceptor.

Belongs to the short-chain dehydrogenases/reductases (SDR) family.

The protein operates within opine metabolism; mannopine biosynthesis. Its function is as follows. Reduces deoxy-fructosyl-glutamine to mannopine. The polypeptide is Agropine synthesis reductase (mas1) (Rhizobium rhizogenes (Agrobacterium rhizogenes)).